A 670-amino-acid polypeptide reads, in one-letter code: NADH-ubiquinone oxidoreductase chain 5 (670 aa).

15 helical membrane passes run 3–23, 36–56, 76–96, 113–133, 136–156, 178–198, 218–238, 250–270, 283–303, 319–339, 340–360, 375–395, 425–445, 461–481, and 618–638; these read LLIVFLPLLGSSVAGFFGRFL, VSFSSILSLIAFYEVALGASA, FLFDSLTVVMLIVVTFISSLV, FMCYLSIFTFFMLMLVTGDNF, LFLGWEGVGLASYLLIHFWFT, LALGIFGCFTLFQTVDFSTIF, ITLICILLFIGAVGKSAQIGL, TPVSALIHAATMVTAGVFMIA, LIVITFAGAMTSFLAATTGIL, LGYMIFACGISNYSVSVFHLM, NHAFFKALLFLSAGSVIHAMS, FPLTYAMMLMGSLSLIGFPFL, VSVLFTSYYSFRLLFLTFLVP, IPMAIPLILLALGSLFVGYLA, and SGSVYHYAFAMLLGSTPFVTF.

The protein belongs to the complex I subunit 5 family.

Its subcellular location is the mitochondrion inner membrane. It carries out the reaction a ubiquinone + NADH + 5 H(+)(in) = a ubiquinol + NAD(+) + 4 H(+)(out). Its function is as follows. Core subunit of the mitochondrial membrane respiratory chain NADH dehydrogenase (Complex I) that is believed to belong to the minimal assembly required for catalysis. Complex I functions in the transfer of electrons from NADH to the respiratory chain. The immediate electron acceptor for the enzyme is believed to be ubiquinone. In Triticum aestivum (Wheat), this protein is NADH-ubiquinone oxidoreductase chain 5 (ND5).